The sequence spans 2004 residues: Immunoglobulin A1 protease (2004 aa).

Positions 1-42 (MEKYFGEKQERFSFRKLSVGLVSATISSLFFMSVLASSSVDA) are cleaved as a signal peptide. The propeptide occupies 43 to 99 (QETAGVHYKYVADSELSSEEKKQLVYDIPTYVENDDETYYLVYKLNSQNQLAELPNT). The LPXTG sorting signal motif lies at 96-100 (LPNTG). A Pentaglycyl murein peptidoglycan amidated threonine modification is found at Thr-99. The next 2 membrane-spanning stretches (helical) occupy residues 106 to 125 (QALVAGASLAAMGILIFAVS) and 132 to 154 (KTVLHLVLVAGIGNGVLVSVHAL). Residues 155–2004 (ENHLLLNYNT…FRSSIFENKK (1850 aa)) lie on the Extracellular side of the membrane. Disordered regions lie at residues 194–213 (TTSESEVSNQKSSVATPTKQ), 235–305 (QEQT…NPQD), 373–394 (EIVSTSTTAPSPRIVEKGTKKT), and 422–720 (PELP…PEKT). Polar residues-rich tracts occupy residues 197-213 (ESEVSNQKSSVATPTKQ) and 235-246 (QEQTPVSSTKPT). The span at 276-296 (LAEHKNLETKKEEKISPKEKT) shows a compositional bias: basic and acidic residues. In terms of domain architecture, G5 spans 314–393 (KPELLYREET…PRIVEKGTKK (80 aa)). 3 repeat units span residues 419–435 (AIQPELPEAVVSDKGEP), 436–452 (EVQPTLPEAVVTDKGET), and 453–469 (EVQPESPDTVVSDKGEP). The interval 419 to 469 (AIQPELPEAVVSDKGEPEVQPTLPEAVVTDKGETEVQPESPDTVVSDKGEP) is 3 X 17 AA approximate tandem repeats. The span at 485–511 (VKPETPVEKTKEQGPEKTEEVPVKPTE) shows a compositional bias: basic and acidic residues. Polar residues-rich tracts occupy residues 516–529 (NPNEGTTEGTSIQE) and 538–572 (EESTTNSEKVSPDTSSKNTGEVSSNPSDSTTSVGE). The span at 574 to 591 (NKPEHNDSKNENSEKTVE) shows a compositional bias: basic and acidic residues. Composition is skewed to polar residues over residues 618 to 639 (EETQTNSGKIANENTGEVSNKP) and 648 to 681 (ESNQPEKNGTATKPENSGNTTSENGQTEPEPSNG). Positions 682 to 699 (NSTEDVSTESNTSNSNGN) are enriched in low complexity. The span at 700–720 (EEIKQENELDPDKKVEEPEKT) shows a compositional bias: basic and acidic residues. His-1645 is a binding site for Zn(2+). Residue Glu-1646 is part of the active site. 2 residues coordinate Zn(2+): His-1649 and Glu-1669.

This sequence belongs to the peptidase M26 family. It depends on Zn(2+) as a cofactor. In terms of processing, the Gram-positive cell-wall anchor motif LPXTG is located in the N-terminal part, in contrast to such motifs in other known streptococcal and staphylococcal proteins. The protease could be cleaved by the sortase and anchored in the membrane via the two potential N-terminal transmembrane domains, whereas the propeptide located prior to the LPXTG motif would remain attached to the cell wall peptidoglycan by an amide bond.

The protein resides in the secreted. Its subcellular location is the cell wall. The protein localises to the membrane. The catalysed reaction is Cleavage of Pro-|-Thr bond in the hinge region of the heavy chain of human IgA.. Its function is as follows. Zinc metalloproteinase which cleaves human immunoglobulin A1 (IgA1) in the hinge region, rendering it less efficient in coating the surface of colonizing or invading pneumococci. Strongly contributes to virulence in mice. May be responsible for pneumococcal infection and is potentially involved in distinct stages of pneumococcal disease. The protein is Immunoglobulin A1 protease (iga) of Streptococcus pneumoniae serotype 4 (strain ATCC BAA-334 / TIGR4).